Here is a 92-residue protein sequence, read N- to C-terminus: Acylphosphatase (92 aa).

Residues 5–92 (QVQLFVRGRV…GDFFDFRITD (88 aa)) enclose the Acylphosphatase-like domain. Residues R20 and N38 contribute to the active site.

It belongs to the acylphosphatase family.

The enzyme catalyses an acyl phosphate + H2O = a carboxylate + phosphate + H(+). This Sorangium cellulosum (strain So ce56) (Polyangium cellulosum (strain So ce56)) protein is Acylphosphatase (acyP).